The chain runs to 268 residues: Putative hydro-lyase A1S_1268 (268 aa).

It belongs to the D-glutamate cyclase family.

This chain is Putative hydro-lyase A1S_1268, found in Acinetobacter baumannii (strain ATCC 17978 / DSM 105126 / CIP 53.77 / LMG 1025 / NCDC KC755 / 5377).